The following is a 222-amino-acid chain: Endonuclease V (222 aa).

2 residues coordinate Mg(2+): Asp-34 and Asp-102.

The protein belongs to the endonuclease V family. Mg(2+) is required as a cofactor.

Its subcellular location is the cytoplasm. It carries out the reaction Endonucleolytic cleavage at apurinic or apyrimidinic sites to products with a 5'-phosphate.. Functionally, DNA repair enzyme involved in the repair of deaminated bases. Selectively cleaves double-stranded DNA at the second phosphodiester bond 3' to a deoxyinosine leaving behind the intact lesion on the nicked DNA. The protein is Endonuclease V of Photorhabdus laumondii subsp. laumondii (strain DSM 15139 / CIP 105565 / TT01) (Photorhabdus luminescens subsp. laumondii).